Here is a 2343-residue protein sequence, read N- to C-terminus: Coagulation factor VIII (2343 aa).

The signal sequence occupies residues 1–19 (MQVELYTCCFLCLLPFSLS). Plastocyanin-like domains lie at 20-199 (ATRK…LLVC) and 207-343 (ERTQ…VDSC). An F5/8 type A 1 domain is found at 20 to 343 (ATRKYYLGAV…MEAYVKVDSC (324 aa)). Residues Asn-233 and Asn-253 are each glycosylated (N-linked (GlcNAc...) asparagine). Sulfotyrosine occurs at positions 359 and 408. Plastocyanin-like domains lie at 393–567 (KTWV…LLIC) and 577–724 (NQMM…VSSC). An F5/8 type A 2 domain is found at 393 to 724 (KTWVHYIAAE…MTALLKVSSC (332 aa)). N-linked (GlcNAc...) asparagine glycosylation is present at Asn-595. Tyr-731, Tyr-732, and Tyr-736 each carry sulfotyrosine. The span at 752-761 (PRSFSQNSRH) shows a compositional bias: polar residues. Disordered regions lie at residues 752-774 (PRSF…ATTT) and 828-865 (ADDH…PEPE). A b region spans residues 754-1659 (SFSQNSRHPS…NPPVSKHHQR (906 aa)). Basic and acidic residues-rich tracts occupy residues 828–841 (ADDH…RNKG) and 850–861 (PELRHSEDREFT). Asn-877, Asn-921, Asn-937, Asn-938, Asn-956, Asn-1007, Asn-1019, Asn-1037, Asn-1062, Asn-1069, and Asn-1080 each carry an N-linked (GlcNAc...) asparagine glycan. Positions 1124 to 1147 (GKNSLSSEQRPSPKQLTSLGSEKS) are disordered. A compositionally biased stretch (polar residues) spans 1125 to 1147 (KNSLSSEQRPSPKQLTSLGSEKS). N-linked (GlcNAc...) asparagine glycans are attached at residues Asn-1179, Asn-1193, Asn-1275, Asn-1290, Asn-1308, Asn-1341, Asn-1391, Asn-1419, Asn-1429, Asn-1453, Asn-1547, and Asn-1618. Residues 1302-1314 (TTRMSSNASQHVI) show a composition bias toward polar residues. A disordered region spans residues 1302-1326 (TTRMSSNASQHVITQRGKRSLKQPR). A disordered region spans residues 1592–1632 (KSQKKSQTNTAFKRKDTILPLGPCENNDSTAAINEGQDKPQ). A sulfotyrosine mark is found at Tyr-1675 and Tyr-1691. 2 Plastocyanin-like domains span residues 1705-1869 (KTRH…LLIC) and 1879-2032 (GRQV…SKKC). The 328-residue stretch at 1705 to 2032 (KTRHYFIAAV…TLFLVYSKKC (328 aa)) folds into the F5/8 type A 3 domain. N-linked (GlcNAc...) asparagine glycosylation occurs at Asn-1821. 2 consecutive F5/8 type C domains span residues 2032–2180 (CQTP…LLGC) and 2185–2337 (CSMP…VLGC). Disulfide bonds link Cys-2032–Cys-2180 and Cys-2185–Cys-2337. Residues Asn-2129 and Asn-2281 are each glycosylated (N-linked (GlcNAc...) asparagine).

Belongs to the multicopper oxidase family. In terms of assembly, interacts with vWF. vWF binding is essential for the stabilization of F8 in circulation. Post-translationally, proteolytically cleaved by cathepsin CTSG to produce a partially activated form.

It localises to the secreted. Its subcellular location is the extracellular space. In terms of biological role, factor VIII, along with calcium and phospholipid, acts as a cofactor for factor IXa when it converts factor X to the activated form, factor Xa. The chain is Coagulation factor VIII (F8) from Canis lupus familiaris (Dog).